A 417-amino-acid polypeptide reads, in one-letter code: Phosphoglycerate kinase (417 aa).

(2R)-3-phosphoglycerate-binding residues include valine 23, aspartate 24, phenylalanine 25, asparagine 26, glutamine 39, arginine 40, serine 63, histidine 64, glycine 66, arginine 67, leucine 122, arginine 123, histidine 170, and arginine 171. Serine 203 is modified (phosphoserine). Glycine 214 serves as a coordination point for ADP. A CDP-binding site is contributed by glycine 214. Residues alanine 215 and lysine 216 each contribute to the AMP site. Alanine 215 serves as a coordination point for ATP. Mg(2+) is bound at residue alanine 215. Aspartate 219 contributes to the CDP binding site. Mg(2+) is bound at residue aspartate 219. Position 220 (lysine 220) interacts with AMP. Lysine 220 contributes to the ATP binding site. Glycine 238 is an ADP binding site. Glycine 238 contacts CDP. The AMP site is built by alanine 239 and glycine 313. 2 residues coordinate ATP: alanine 239 and glycine 313. Glycine 338 and phenylalanine 343 together coordinate CDP. Position 343 (phenylalanine 343) interacts with ADP. Residue glutamate 344 participates in AMP binding. ATP contacts are provided by glutamate 344, aspartate 375, and threonine 376. Aspartate 375 provides a ligand contact to Mg(2+).

The protein belongs to the phosphoglycerate kinase family. In terms of assembly, monomer. Requires Mg(2+) as cofactor. In terms of processing, dephosphorylated by PTC1 and PTC2 at Ser-203; the protein is cytosolic when dephosphorylated.

It localises to the cytoplasm. The protein localises to the cytosol. The protein resides in the mitochondrion. The enzyme catalyses (2R)-3-phosphoglycerate + ATP = (2R)-3-phospho-glyceroyl phosphate + ADP. It participates in carbohydrate degradation; glycolysis; pyruvate from D-glyceraldehyde 3-phosphate: step 2/5. Its function is as follows. Catalyzes one of the two ATP producing reactions in the glycolytic pathway via the reversible conversion of 1,3-diphosphoglycerate to 3-phosphoglycerate. Both L- and D- forms of purine and pyrimidine nucleotides can be used as substrates, but the activity is much lower on pyrimidines. Negatively regulates the biosynthesis of acetyl-CoA from pyruvate in the mitochondrion and consequently also attenuates aflatoxin production. In Aspergillus flavus (strain ATCC 200026 / FGSC A1120 / IAM 13836 / NRRL 3357 / JCM 12722 / SRRC 167), this protein is Phosphoglycerate kinase.